The sequence spans 529 residues: MEQEQKLLVSDSNGLTKKESLKNTITGDESKNNLKTVQFSNSKADKERASKWSRSDGPENYKDEDTKEILLTGSQGGKTERDDSYENDSNLGSQRNCTEKEEEQPNHWGWSPGDHTGPAGQQNPSFGDKPYKCSECWKSFSNSSHLRIHQRTHSGEKPYRCSECGKCFSNSSHLIQHLRTHTGEKPYQCGECGKSFSNTSHLIIHERTHTGEKPYKCPECAKSLSSSSHLIQHHRSHTGEKPYECPLCGKCFSHSYVLVEHQRTHTGEKPYKCPDCGKSFSQSSSLIRHQRTHTGEKPYKCPECGKGFGCNSTLIKHQRIHTGEKPYQCIECGKNFSRSSNLVTHQKMHTDDKTYQSSEYEESLSQNYSLIEECRIQPGEKPYKCCECGKSFGLSSHLIRHQRTHTGEKPYRCSECWKTFSQSSTLVIHQRTHTGEKPYKCPDCGECFSQSFNLIRHRRTHMGEKPYKCTDCEKCFSRSAYLSQHRKIHVGKSFESPEVEDFPHEWTWKNYSGEIALIPSFSVPSSSPS.

Residues 1–125 (MEQEQKLLVS…TGPAGQQNPS (125 aa)) are disordered. K6 is covalently cross-linked (Glycyl lysine isopeptide (Lys-Gly) (interchain with G-Cter in SUMO2)). Residues 22 to 42 (KNTITGDESKNNLKTVQFSNS) are compositionally biased toward polar residues. Basic and acidic residues predominate over residues 43–68 (KADKERASKWSRSDGPENYKDEDTKE). Positions 87 to 96 (NDSNLGSQRN) are enriched in polar residues. 12 consecutive C2H2-type zinc fingers follow at residues 131–153 (YKCSECWKSFSNSSHLRIHQRTH), 159–181 (YRCSECGKCFSNSSHLIQHLRTH), 187–209 (YQCGECGKSFSNTSHLIIHERTH), 215–237 (YKCPECAKSLSSSSHLIQHHRSH), 243–265 (YECPLCGKCFSHSYVLVEHQRTH), 271–293 (YKCPDCGKSFSQSSSLIRHQRTH), 299–321 (YKCPECGKGFGCNSTLIKHQRIH), 327–349 (YQCIECGKNFSRSSNLVTHQKMH), 383–405 (YKCCECGKSFGLSSHLIRHQRTH), 411–433 (YRCSECWKTFSQSSTLVIHQRTH), 439–461 (YKCPDCGECFSQSFNLIRHRRTH), and 467–489 (YKCTDCEKCFSRSAYLSQHRKIH).

The protein belongs to the krueppel C2H2-type zinc-finger protein family.

The protein resides in the nucleus. May be involved in transcriptional regulation. The sequence is that of Zinc finger protein 572 (ZNF572) from Bos taurus (Bovine).